Reading from the N-terminus, the 360-residue chain is Photosystem II protein D1 1 (360 aa).

At 2–31 the chain is on the cytoplasmic side; that stretch reads TTTLQRRESANLWERFCNWVTSTDNRLYVG. The helical transmembrane segment at 32–53 threads the bilayer; the sequence is WFGVIMIPTLLAATICFVIAFI. Over 54–110 the chain is Lumenal; it reads AAPPVDIDGIREPVSGSLLYGNNIITGAVVPSSNAIGLHFYPIWEAASLDEWLYNGG. The helical transmembrane segment at 111 to 132 threads the bilayer; it reads PYQLIIFHFLLGASCYMGRQWE. Chlorophyll a is bound at residue H118. Pheophytin a-binding residues include Y126 and Q130. Topologically, residues 133–142 are cytoplasmic; the sequence is LSYRLGMRPW. A helical membrane pass occupies residues 143-163; that stretch reads ICVAYSAPLASAFAVFLIYPI. Residue Y147 coordinates pheophytin a. Residues 164 to 191 are Lumenal-facing; sequence GQGSFSDGMPLGISGTFNFMIVFQAEHN. The [CaMn4O5] cluster site is built by D170 and E189. A helical membrane pass occupies residues 192–217; the sequence is ILMHPFHQLGVAGVFGGALFCAMHGS. Position 198 (H198) interacts with chlorophyll a. A quinone-binding positions include H215 and 264–265; that span reads SF. H215 serves as a coordination point for Fe cation. At 218–272 the chain is on the cytoplasmic side; the sequence is LVTSSLIRETTETESANYGYKFGQEEETYNIVAAHGYFGRLIFQYASFNNSRSLH. H272 contacts Fe cation. The chain crosses the membrane as a helical span at residues 273–295; that stretch reads FFLAAWPVVGVWFTALGISTMAF. The Lumenal segment spans residues 296-344; that stretch reads NLNGFNFNHSVIDAKGNVINTWADIINRANLGMEVMHERNAHNFPLDLA. [CaMn4O5] cluster contacts are provided by H332, E333, D342, and A344. Positions 345–360 are excised as a propeptide; sequence SAESAPVAMIAPSING.

The protein belongs to the reaction center PufL/M/PsbA/D family. As to quaternary structure, PSII is composed of 1 copy each of membrane proteins PsbA, PsbB, PsbC, PsbD, PsbE, PsbF, PsbH, PsbI, PsbJ, PsbK, PsbL, PsbM, PsbT, PsbX, PsbY, PsbZ, Psb30/Ycf12, peripheral proteins PsbO, CyanoQ (PsbQ), PsbU, PsbV and a large number of cofactors. It forms dimeric complexes. Precursor protein interacts with Ycf48. Part of a photosystem II (PSII) assembly intermediate complex PSII-I; crystallized from a strain deleted of psbJ, it forms monomeric PSII before addition of the oxygen evolving complex. PSII-I includes 3 assembly factors not found in mature PSII (Psb27, Psb28 and Psb34). In PSII-I the C-terminus of D1 (this subunit) is already processed but not yet found at its final position. The D1/D2 heterodimer binds P680, chlorophylls that are the primary electron donor of PSII, and subsequent electron acceptors. It shares a non-heme iron and each subunit binds pheophytin, quinone, additional chlorophylls, carotenoids and lipids. D1 provides most of the ligands for the Mn4-Ca-O5 cluster of the oxygen-evolving complex (OEC). There is also a Cl(-1) ion associated with D1 and D2, which is required for oxygen evolution. PSII binds additional chlorophylls, carotenoids and specific lipids. serves as cofactor. In terms of processing, C-terminally processed by CtpA; processing is essential to allow assembly of the oxygen-evolving complex and thus photosynthetic growth. Post-translationally, tyr-161 forms a radical intermediate that is referred to as redox-active TyrZ, YZ or Y-Z.

The protein localises to the cellular thylakoid membrane. It carries out the reaction 2 a plastoquinone + 4 hnu + 2 H2O = 2 a plastoquinol + O2. Its function is as follows. Photosystem II (PSII) is a light-driven water:plastoquinone oxidoreductase that uses light energy to abstract electrons from H(2)O, generating O(2) and a proton gradient subsequently used for ATP formation. It consists of a core antenna complex that captures photons, and an electron transfer chain that converts photonic excitation into a charge separation. The D1/D2 (PsbA/PsbD) reaction center heterodimer binds P680, the primary electron donor of PSII as well as several subsequent electron acceptors. This Thermosynechococcus vestitus (strain NIES-2133 / IAM M-273 / BP-1) protein is Photosystem II protein D1 1.